Consider the following 427-residue polypeptide: UPF0597 protein CPF_0803 (427 aa).

Belongs to the UPF0597 family.

In Clostridium perfringens (strain ATCC 13124 / DSM 756 / JCM 1290 / NCIMB 6125 / NCTC 8237 / Type A), this protein is UPF0597 protein CPF_0803.